We begin with the raw amino-acid sequence, 430 residues long: Tol-Pal system protein TolB (430 aa).

The first 21 residues, methionine 1–alanine 21, serve as a signal peptide directing secretion.

The protein belongs to the TolB family. The Tol-Pal system is composed of five core proteins: the inner membrane proteins TolA, TolQ and TolR, the periplasmic protein TolB and the outer membrane protein Pal. They form a network linking the inner and outer membranes and the peptidoglycan layer.

The protein resides in the periplasm. Part of the Tol-Pal system, which plays a role in outer membrane invagination during cell division and is important for maintaining outer membrane integrity. TolB occupies a key intermediary position in the Tol-Pal system because it communicates directly with both membrane-embedded components, Pal in the outer membrane and TolA in the inner membrane. The polypeptide is Tol-Pal system protein TolB (Edwardsiella ictaluri (strain 93-146)).